Here is a 208-residue protein sequence, read N- to C-terminus: Probable GTP-binding protein EngB (208 aa).

The EngB-type G domain occupies 23–205 (LTSEMVVLGR…RQTLLKHLLT (183 aa)). GTP contacts are provided by residues 31–38 (GRSNVGKS), 57–61 (GKTRL), 84–87 (DLPG), 154–157 (TKFD), and 182–184 (FNA). Mg(2+) contacts are provided by S38 and T59.

This sequence belongs to the TRAFAC class TrmE-Era-EngA-EngB-Septin-like GTPase superfamily. EngB GTPase family. Mg(2+) is required as a cofactor.

Necessary for normal cell division and for the maintenance of normal septation. This chain is Probable GTP-binding protein EngB, found in Helicobacter pylori (strain ATCC 700392 / 26695) (Campylobacter pylori).